A 318-amino-acid polypeptide reads, in one-letter code: Protein OPG137 (318 aa).

Positions 145-172 (VYDKDKRIQMLEDEVVNLRNQRSNTKSS) form a coiled coil.

This sequence belongs to the orthopoxvirus OPG137 family. In terms of assembly, homomultimer. Interacts with OPG160. In terms of processing, phosphorylated by a OPG054-independent mechanism.

It localises to the host cytoplasm. Its function is as follows. Required for viral crescent formation early during virus morphogenesis. This chain is Protein OPG137 (OPG137), found in Vaccinia virus (strain Ankara) (VACV).